Reading from the N-terminus, the 345-residue chain is S-adenosylmethionine:tRNA ribosyltransferase-isomerase (345 aa).

It belongs to the QueA family. Monomer.

It is found in the cytoplasm. It carries out the reaction 7-aminomethyl-7-carbaguanosine(34) in tRNA + S-adenosyl-L-methionine = epoxyqueuosine(34) in tRNA + adenine + L-methionine + 2 H(+). The protein operates within tRNA modification; tRNA-queuosine biosynthesis. In terms of biological role, transfers and isomerizes the ribose moiety from AdoMet to the 7-aminomethyl group of 7-deazaguanine (preQ1-tRNA) to give epoxyqueuosine (oQ-tRNA). The sequence is that of S-adenosylmethionine:tRNA ribosyltransferase-isomerase from Shewanella amazonensis (strain ATCC BAA-1098 / SB2B).